A 444-amino-acid polypeptide reads, in one-letter code: 3-isopropylmalate dehydratase large subunit (444 aa).

Residues Cys-348, Cys-408, and Cys-411 each contribute to the [4Fe-4S] cluster site.

Belongs to the aconitase/IPM isomerase family. LeuC type 1 subfamily. In terms of assembly, heterodimer of LeuC and LeuD. [4Fe-4S] cluster is required as a cofactor.

The enzyme catalyses (2R,3S)-3-isopropylmalate = (2S)-2-isopropylmalate. It functions in the pathway amino-acid biosynthesis; L-leucine biosynthesis; L-leucine from 3-methyl-2-oxobutanoate: step 2/4. Functionally, catalyzes the isomerization between 2-isopropylmalate and 3-isopropylmalate, via the formation of 2-isopropylmaleate. The protein is 3-isopropylmalate dehydratase large subunit of Buchnera aphidicola subsp. Uroleucon ambrosiae.